The following is a 214-amino-acid chain: Orotate phosphoribosyltransferase (214 aa).

5-phospho-alpha-D-ribose 1-diphosphate contacts are provided by residues arginine 125, lysine 126, lysine 129, histidine 131, and 151-159; that span reads EDTSTTGNS. Residues threonine 155 and arginine 183 each contribute to the orotate site.

The protein belongs to the purine/pyrimidine phosphoribosyltransferase family. PyrE subfamily. In terms of assembly, homodimer. Mg(2+) is required as a cofactor.

It catalyses the reaction orotidine 5'-phosphate + diphosphate = orotate + 5-phospho-alpha-D-ribose 1-diphosphate. It participates in pyrimidine metabolism; UMP biosynthesis via de novo pathway; UMP from orotate: step 1/2. Functionally, catalyzes the transfer of a ribosyl phosphate group from 5-phosphoribose 1-diphosphate to orotate, leading to the formation of orotidine monophosphate (OMP). In Tropheryma whipplei (strain Twist) (Whipple's bacillus), this protein is Orotate phosphoribosyltransferase.